Here is a 64-residue protein sequence, read N- to C-terminus: Defensin-like protein 41 (64 aa).

The disordered stretch occupies residues 1 to 21 (MTQGKRKHPCDLKNPSKRAPP). Intrachain disulfides connect cysteine 10–cysteine 61, cysteine 24–cysteine 47, cysteine 33–cysteine 56, and cysteine 37–cysteine 58.

The protein belongs to the DEFL family.

In Arabidopsis thaliana (Mouse-ear cress), this protein is Defensin-like protein 41.